Consider the following 175-residue polypeptide: Protein-export protein SecB (175 aa).

The protein belongs to the SecB family. As to quaternary structure, homotetramer, a dimer of dimers. One homotetramer interacts with 1 SecA dimer.

It localises to the cytoplasm. One of the proteins required for the normal export of preproteins out of the cell cytoplasm. It is a molecular chaperone that binds to a subset of precursor proteins, maintaining them in a translocation-competent state. It also specifically binds to its receptor SecA. This Anaplasma marginale (strain Florida) protein is Protein-export protein SecB.